A 97-amino-acid polypeptide reads, in one-letter code: Large ribosomal subunit protein uL23 (97 aa).

It belongs to the universal ribosomal protein uL23 family. Part of the 50S ribosomal subunit. Contacts protein L29, and trigger factor when it is bound to the ribosome.

In terms of biological role, one of the early assembly proteins it binds 23S rRNA. One of the proteins that surrounds the polypeptide exit tunnel on the outside of the ribosome. Forms the main docking site for trigger factor binding to the ribosome. The polypeptide is Large ribosomal subunit protein uL23 (Marinobacter nauticus (strain ATCC 700491 / DSM 11845 / VT8) (Marinobacter aquaeolei)).